The sequence spans 392 residues: Phosphoglycerate kinase (392 aa).

Substrate contacts are provided by residues 21–23, Arg36, 59–62, Arg114, and Arg147; these read DMN and HLGR. Residues Lys198, Glu320, and 346–349 each bind ATP; that span reads GGDT.

This sequence belongs to the phosphoglycerate kinase family. As to quaternary structure, monomer.

Its subcellular location is the cytoplasm. The enzyme catalyses (2R)-3-phosphoglycerate + ATP = (2R)-3-phospho-glyceroyl phosphate + ADP. Its pathway is carbohydrate degradation; glycolysis; pyruvate from D-glyceraldehyde 3-phosphate: step 2/5. This chain is Phosphoglycerate kinase (pgk), found in Neisseria meningitidis serogroup B (strain ATCC BAA-335 / MC58).